The following is a 100-amino-acid chain: Urease subunit gamma (100 aa).

This sequence belongs to the urease gamma subunit family. As to quaternary structure, heterotrimer of UreA (gamma), UreB (beta) and UreC (alpha) subunits. Three heterotrimers associate to form the active enzyme.

Its subcellular location is the cytoplasm. The enzyme catalyses urea + 2 H2O + H(+) = hydrogencarbonate + 2 NH4(+). The protein operates within nitrogen metabolism; urea degradation; CO(2) and NH(3) from urea (urease route): step 1/1. This is Urease subunit gamma from Mycolicibacterium vanbaalenii (strain DSM 7251 / JCM 13017 / BCRC 16820 / KCTC 9966 / NRRL B-24157 / PYR-1) (Mycobacterium vanbaalenii).